The chain runs to 87 residues: RNA-binding protein Hfq (87 aa).

The Sm domain occupies 9-68; the sequence is DPFLNALRRERIPVSIYLVNGIKLQGQIESFDQFVILLKNTVNQMVYKHAISTVVPARPV. The segment at 65 to 87 is disordered; it reads ARPVSHHSGDRPASDRPAEKSEE. Residues 71 to 87 show a composition bias toward basic and acidic residues; it reads HSGDRPASDRPAEKSEE.

It belongs to the Hfq family.

In terms of biological role, RNA chaperone that binds small regulatory RNA (sRNAs) and mRNAs to facilitate mRNA translational regulation in response to envelope stress, environmental stress and changes in metabolite concentrations. Also binds with high specificity to tRNAs. Essential for virulence in the suckling mouse model of cholera pathogenesis. The protein is RNA-binding protein Hfq of Vibrio cholerae serotype O1 (strain ATCC 39315 / El Tor Inaba N16961).